The chain runs to 190 residues: Protein GrpE (190 aa).

The span at 1 to 31 shows a compositional bias: basic and acidic residues; that stretch reads MTEEQKKYEDAENLESKSENPEEASAEKSEN. The disordered stretch occupies residues 1-39; the sequence is MTEEQKKYEDAENLESKSENPEEASAEKSENGVEDLQAE.

The protein belongs to the GrpE family. As to quaternary structure, homodimer.

It is found in the cytoplasm. In terms of biological role, participates actively in the response to hyperosmotic and heat shock by preventing the aggregation of stress-denatured proteins, in association with DnaK and GrpE. It is the nucleotide exchange factor for DnaK and may function as a thermosensor. Unfolded proteins bind initially to DnaJ; upon interaction with the DnaJ-bound protein, DnaK hydrolyzes its bound ATP, resulting in the formation of a stable complex. GrpE releases ADP from DnaK; ATP binding to DnaK triggers the release of the substrate protein, thus completing the reaction cycle. Several rounds of ATP-dependent interactions between DnaJ, DnaK and GrpE are required for fully efficient folding. This is Protein GrpE from Zymomonas mobilis subsp. mobilis (strain ATCC 31821 / ZM4 / CP4).